Consider the following 150-residue polypeptide: 3-dehydroquinate dehydratase (150 aa).

Catalysis depends on Tyr-26, which acts as the Proton acceptor. 3 residues coordinate substrate: Asn-77, His-83, and Asp-90. The active-site Proton donor is the His-103. Substrate is bound by residues 104–105 (LS) and Arg-114.

It belongs to the type-II 3-dehydroquinase family. In terms of assembly, homododecamer.

The enzyme catalyses 3-dehydroquinate = 3-dehydroshikimate + H2O. It participates in metabolic intermediate biosynthesis; chorismate biosynthesis; chorismate from D-erythrose 4-phosphate and phosphoenolpyruvate: step 3/7. In terms of biological role, catalyzes a trans-dehydration via an enolate intermediate. In Yersinia pseudotuberculosis serotype O:1b (strain IP 31758), this protein is 3-dehydroquinate dehydratase.